Consider the following 285-residue polypeptide: Small ribosomal subunit protein uS2 (285 aa).

Residues 231 to 285 (GGKSGQAAAEPMAEWERELLEQHNAQQAEQAEAPAAEAPAEPAEAPAAEAAPQGE) are disordered. The span at 255–285 (AQQAEQAEAPAAEAPAEPAEAPAAEAAPQGE) shows a compositional bias: low complexity.

It belongs to the universal ribosomal protein uS2 family.

This Micrococcus luteus (strain ATCC 4698 / DSM 20030 / JCM 1464 / CCM 169 / CCUG 5858 / IAM 1056 / NBRC 3333 / NCIMB 9278 / NCTC 2665 / VKM Ac-2230) (Micrococcus lysodeikticus) protein is Small ribosomal subunit protein uS2.